The chain runs to 301 residues: MNKPLPDVALTEISPALVSLDWVGMQGVEVPIRLAEASIRHPVHAHVDLQVDLADPSVKGIHMSRLYRLLDGYAERQIVSPDTLAALLEAMVESHLDCHSSHARLTLSFNLLCRRPALITEGLSGWKSYPVKLDATWHAGRLCLDSSVDITYSSTCPCSAALSRQLLEEAFAARFGRQSFVDPMQVATWLRENASFATPHSQRSVATVQVRVAEQAAELGLMTLIDLVEQALGTPVQTAVKRADEQAFARLNGQNLMYVEDAARKVQQALEGRYAASSVSVRHFESLHPHDAAAQTSNYLS.

This sequence belongs to the GTP cyclohydrolase IV family.

It catalyses the reaction GTP + H2O = 7,8-dihydroneopterin 3'-triphosphate + formate + H(+). The protein operates within cofactor biosynthesis; 7,8-dihydroneopterin triphosphate biosynthesis; 7,8-dihydroneopterin triphosphate from GTP: step 1/1. Converts GTP to 7,8-dihydroneopterin triphosphate. In Pseudomonas syringae pv. syringae (strain B728a), this protein is GTP cyclohydrolase FolE2.